A 543-amino-acid chain; its full sequence is MSAKDVKFDTAARSRMLRGVNTLADAVKVTLGPKGRNVVIDKSFGAPRITKDGVTVAKEIELEDKFENMGAQMVKEVASRTNDQAGDGTTTSTVLAQAIVNEGMKAVAAGMNPMDLKRGIDLATSKVVEAIKAAARDVKDSDEVAQVGTISANGEAEIGRQIADAMQKVGNDGVITVEENKGLETETEVVEGMQFDRGYLSPYFVTNPDKMTAELEDPFILIHEKKLSSLQPLVPLLESIIQAGKPLLVIAEDVEGEALATLVVNKLRGGLKIAAVKAPGFGDRRKAMLQDIAILTGGQVISEDLGMKLESVTIDMLGTAKKVAITKDETTVVNGAGEKAEIDARVSQIRTQIEETTSDYDREKLQERVAKLAGGVAVIRVGGMTEVEVKERKDRVDDALNATRAAVQEGIVVGGGVALVQGAKALDGLQGANPDQNAGIAIVRRALEAPLRQIAENAGVDGSVVAGKIRESDDATFGFNAQTEEYGDLFSFGVIDPAKVVRTALEDASSVAGLLITTEAMVAVKPAGKGAASPAMPDMGGMM.

Residues 30–33 (TLGP), lysine 51, 87–91 (DGTTT), glycine 415, and aspartate 496 each bind ATP.

The protein belongs to the chaperonin (HSP60) family. In terms of assembly, forms a cylinder of 14 subunits composed of two heptameric rings stacked back-to-back. Interacts with the co-chaperonin GroES.

It localises to the cytoplasm. It catalyses the reaction ATP + H2O + a folded polypeptide = ADP + phosphate + an unfolded polypeptide.. Together with its co-chaperonin GroES, plays an essential role in assisting protein folding. The GroEL-GroES system forms a nano-cage that allows encapsulation of the non-native substrate proteins and provides a physical environment optimized to promote and accelerate protein folding. This Roseobacter denitrificans (strain ATCC 33942 / OCh 114) (Erythrobacter sp. (strain OCh 114)) protein is Chaperonin GroEL 1.